The primary structure comprises 830 residues: ABC transporter G family member STR (830 aa).

Over 1-551 (MAKFKRTDTN…RTTLNVIRTP (551 aa)) the chain is Cytoplasmic. In terms of domain architecture, ABC transporter spans 46-297 (LEFNNLSYSV…LAGFARPVPD (252 aa)). 90–97 (GPSGAGKS) contributes to the ATP binding site. Disordered regions lie at residues 333–356 (DQAAKTPVRKPPKTPKIPRTPYAK), 368–422 (SHFS…SMQS), and 471–491 (SMSSSQFSMTQQTPGPGNKTP). The segment covering 368–378 (SHFSTGNMNSQ) has biased composition (polar residues). Acidic residues predominate over residues 395 to 405 (DYEDDDDEDEF). Low complexity predominate over residues 471-483 (SMSSSQFSMTQQT). The chain crosses the membrane as a helical span at residues 552–572 (ELFLSREIVLTVMGLVLSSFF). The Extracellular segment spans residues 573 to 588 (KKLSHFDFKTINHLLN). The chain crosses the membrane as a helical span at residues 589-609 (FYIFTICLVFFSSNDAVPTFI). Residues 610–630 (QERFIFIRETSHNAYRASSYV) lie on the Cytoplasmic side of the membrane. A helical membrane pass occupies residues 631 to 651 (ISSLIVYLPFFAIQGFTFAGI). Residues 652-661 (TQYILHLNSS) lie on the Extracellular side of the membrane. N659 carries an N-linked (GlcNAc...) asparagine glycan. Residues 662–682 (ILSFWLILYSSLVTSNAYVML) form a helical membrane-spanning segment. The Cytoplasmic portion of the chain corresponds to 683–690 (VSALVPSY). The helical transmembrane segment at 691–711 (ITGYAVVIATTALFFLTCGFF) threads the bilayer. Residues 712-798 (LKRTQIPLVW…LFSMDIREEN (87 aa)) are Extracellular-facing. 2 N-linked (GlcNAc...) asparagine glycosylation sites follow: N771 and N780. A helical transmembrane segment spans residues 799–819 (IWLDIVILLAWGVLYRLFFYV). At 820–830 (VLRFYSKNERK) the chain is on the cytoplasmic side.

Belongs to the ABC transporter superfamily. ABCG family. Stunted arbuscule (STR) subfamily. Heterodimerizes with STR2; the resulting transporter is located in the peri-arbuscular membrane.

It is found in the cell membrane. Together with STR2, required for arbuscule development in arbuscular mycorrhizal (AM) symbiosis. This is ABC transporter G family member STR from Petunia hybrida (Petunia).